Here is a 429-residue protein sequence, read N- to C-terminus: Phenylalanine--tRNA ligase, chloroplastic/mitochondrial (429 aa).

A chloroplast and mitochondrion-targeting transit peptide spans 1–53 (MTVFSVQSTIFSRASVALLSSNGFKRFSFVSSFSSSAAYSPPKMRKRRYPIVS). Ala-54 is modified (N-acetylalanine). Residues 163 to 166 (SAHQ), Arg-185, 192 to 194 (THY), 199 to 201 (QME), Glu-269, and Phe-294 contribute to the substrate site. In terms of domain architecture, FDX-ACB spans 338–429 (SKYPPCYKDI…VQKKLNVELR (92 aa)).

It belongs to the class-II aminoacyl-tRNA synthetase family. As to quaternary structure, monomer.

It localises to the plastid. The protein localises to the chloroplast stroma. It is found in the mitochondrion matrix. It carries out the reaction tRNA(Phe) + L-phenylalanine + ATP = L-phenylalanyl-tRNA(Phe) + AMP + diphosphate + H(+). Its function is as follows. Is responsible for the charging of tRNA(Phe) with phenylalanine in mitochondrial translation. The chain is Phenylalanine--tRNA ligase, chloroplastic/mitochondrial from Arabidopsis thaliana (Mouse-ear cress).